The sequence spans 102 residues: MTGTALTGMMIVAAGLFAAGVFGVLARRGILFQLISLEVALSGPALAFIAAGAYHGDAEGQGMFVLVLTLAAAEVAVGLALFLRIRRSKGSDDSDAVSGLKG.

Transmembrane regions (helical) follow at residues 5-25 (ALTG…FGVL), 30-50 (ILFQ…AFIA), and 63-83 (MFVL…ALFL).

This sequence belongs to the complex I subunit 4L family. As to quaternary structure, NDH-1 is composed of 14 different subunits. Subunits NuoA, H, J, K, L, M, N constitute the membrane sector of the complex.

It localises to the cell inner membrane. The catalysed reaction is a quinone + NADH + 5 H(+)(in) = a quinol + NAD(+) + 4 H(+)(out). NDH-1 shuttles electrons from NADH, via FMN and iron-sulfur (Fe-S) centers, to quinones in the respiratory chain. The immediate electron acceptor for the enzyme in this species is believed to be ubiquinone. Couples the redox reaction to proton translocation (for every two electrons transferred, four hydrogen ions are translocated across the cytoplasmic membrane), and thus conserves the redox energy in a proton gradient. This chain is NADH-quinone oxidoreductase subunit K, found in Rhodopseudomonas palustris (strain BisB18).